The sequence spans 65 residues: Conotoxin Bu19 (65 aa).

The signal sequence occupies residues Met1–Ser21. A propeptide spanning residues Phe22 to Arg48 is cleaved from the precursor. Intrachain disulfides connect Cys50/Cys56 and Cys51/Cys64. Cys64 carries the cysteine amide modification.

The protein belongs to the conotoxin A superfamily. As to expression, expressed by the venom duct.

It localises to the secreted. The chain is Conotoxin Bu19 from Conus bullatus (Bubble cone).